The sequence spans 397 residues: Elongation factor Tu (397 aa).

The 198-residue stretch at 10–207 (KPHVNIGTIG…AVDESIPDPV (198 aa)) folds into the tr-type G domain. Residues 19–26 (GHVDHGKT) are G1. 19 to 26 (GHVDHGKT) is a GTP binding site. Threonine 26 contributes to the Mg(2+) binding site. A G2 region spans residues 63–67 (GITIN). The interval 84 to 87 (DAPG) is G3. GTP-binding positions include 84-88 (DAPGH) and 139-142 (NKAD). A G4 region spans residues 139-142 (NKAD). The segment at 177 to 179 (SGL) is G5.

This sequence belongs to the TRAFAC class translation factor GTPase superfamily. Classic translation factor GTPase family. EF-Tu/EF-1A subfamily. Monomer.

The protein localises to the cytoplasm. The catalysed reaction is GTP + H2O = GDP + phosphate + H(+). GTP hydrolase that promotes the GTP-dependent binding of aminoacyl-tRNA to the A-site of ribosomes during protein biosynthesis. This Tropheryma whipplei (strain Twist) (Whipple's bacillus) protein is Elongation factor Tu.